Reading from the N-terminus, the 785-residue chain is Peptide transporter family 2 (785 aa).

The next 9 membrane-spanning stretches (helical) occupy residues 46–66 (FSFYGMRAVLTLYFFNILNFS), 72–92 (VLFHAFTVICYSSPLLGSILA), 99–119 (FWTIFFISIFYACGQILLAFS), 134–154 (LLGLLIVGLGTGGIKPCVSAF), 167–187 (ISLFFSMFYFSINAGSLISMW), 208–228 (FGIPAILMIVATLVFMAGSFW), 303–323 (VIVMMIPVPMFWALYDQQGST), 345–365 (MGVLNAFLILFFIPIFQSIVY), and 382–402 (AGGGILTAVSFFVCGIVQLFV). A glycan (N-linked (GlcNAc...) asparagine) is linked at Asn-467. Transmembrane regions (helical) follow at residues 670-690 (ILWQIPQYVILTAGEVLFSIT), 711-731 (WLFTTAIGDLIVVVIFMLNIF), and 738-758 (MFVFGGIMLFVIFVFILLAVF).

It belongs to the major facilitator superfamily. Proton-dependent oligopeptide transporter (POT/PTR) (TC 2.A.17) family. As to expression, expressed in vulval, pharyngeal and anal muscles.

The protein resides in the membrane. Functionally, proton-dependent uptake of di- or tripeptides, and to a minor extent tetrapeptides. Transport is independent of sodium and chloride ions. Protein shows high affinity to peptide substrates. The polypeptide is Peptide transporter family 2 (pept-2) (Caenorhabditis elegans).